Consider the following 753-residue polypeptide: Ribosome biogenesis protein BOP1 homolog (753 aa).

A disordered region spans residues 1 to 155 (MTKRSKGANE…RNTVGNVPLK (155 aa)). Composition is skewed to basic and acidic residues over residues 7–18 (GANEDKLIETKS) and 30–41 (KPVEAESLKEED). Acidic residues-rich tracts occupy residues 64 to 75 (DDFDSDFSDSED) and 83 to 109 (EDGD…DDDG). Over residues 110–121 (SEHVGSDNNEEH) the composition is skewed to basic and acidic residues. The span at 122–142 (GSDEDSERGEAVEESDSSEDE) shows a compositional bias: acidic residues. 6 WD repeats span residues 421–462 (GHTG…KVWQ), 464–502 (DEAI…DEEQ), 539–581 (RHFK…TQRL), 626–665 (TGLR…KPYK), 669–708 (NHPK…DLNQ), and 722–753 (SSKG…LYCH).

This sequence belongs to the WD repeat BOP1/ERB1 family. As to quaternary structure, interacts with PES. Interacts with WDR12.

The protein resides in the nucleus. It is found in the nucleolus. The protein localises to the nucleoplasm. Required for maturation of ribosomal RNAs and formation of the large ribosomal subunit. Plays an essential role in cell growth and survival through its regulation of ribosome biogenesis and mitotic progression. This chain is Ribosome biogenesis protein BOP1 homolog, found in Arabidopsis thaliana (Mouse-ear cress).